A 384-amino-acid chain; its full sequence is S-adenosylmethionine synthase (384 aa).

ATP is bound at residue His-15. Asp-17 serves as a coordination point for Mg(2+). Glu-43 provides a ligand contact to K(+). Residues Glu-56 and Gln-99 each contribute to the L-methionine site. The flexible loop stretch occupies residues Gln-99 to Lys-109. ATP-binding positions include Asp-164–Lys-166, Arg-230–Phe-231, Asp-239, Arg-245–Lys-246, Ala-262, and Lys-266. An L-methionine-binding site is contributed by Asp-239. Lys-270 provides a ligand contact to L-methionine.

It belongs to the AdoMet synthase family. In terms of assembly, homotetramer; dimer of dimers. The cofactor is Mg(2+). K(+) serves as cofactor.

The protein resides in the cytoplasm. It carries out the reaction L-methionine + ATP + H2O = S-adenosyl-L-methionine + phosphate + diphosphate. It functions in the pathway amino-acid biosynthesis; S-adenosyl-L-methionine biosynthesis; S-adenosyl-L-methionine from L-methionine: step 1/1. Catalyzes the formation of S-adenosylmethionine (AdoMet) from methionine and ATP. The overall synthetic reaction is composed of two sequential steps, AdoMet formation and the subsequent tripolyphosphate hydrolysis which occurs prior to release of AdoMet from the enzyme. This chain is S-adenosylmethionine synthase, found in Aliivibrio salmonicida (strain LFI1238) (Vibrio salmonicida (strain LFI1238)).